Here is a 527-residue protein sequence, read N- to C-terminus: Exodeoxyribonuclease 7 large subunit (527 aa).

Residues 499 to 527 (AGEEGAPPPAAPKKRASRPVVPTKQGSLF) form a disordered region.

It belongs to the XseA family. As to quaternary structure, heterooligomer composed of large and small subunits.

The protein localises to the cytoplasm. The catalysed reaction is Exonucleolytic cleavage in either 5'- to 3'- or 3'- to 5'-direction to yield nucleoside 5'-phosphates.. Its function is as follows. Bidirectionally degrades single-stranded DNA into large acid-insoluble oligonucleotides, which are then degraded further into small acid-soluble oligonucleotides. The chain is Exodeoxyribonuclease 7 large subunit from Sinorhizobium fredii (strain NBRC 101917 / NGR234).